The following is a 293-amino-acid chain: Cell division protein FtsQ (293 aa).

Over 1–27 (MRPLMRNRASERGVDPAPSRWAWRMQR) the chain is Cytoplasmic. Residues 28–48 (LLLTPAFLLFLRAGVPVLVLF) form a helical membrane-spanning segment. The Periplasmic segment spans residues 49–293 (GAATWWLSDT…WWEIRQVSRQ (245 aa)). The POTRA domain occupies 81–149 (FMVQLMAVDG…GVLHIDVEPR (69 aa)).

Belongs to the FtsQ/DivIB family. FtsQ subfamily.

The protein resides in the cell inner membrane. In terms of biological role, essential cell division protein. This Roseobacter litoralis (strain ATCC 49566 / DSM 6996 / JCM 21268 / NBRC 15278 / OCh 149) protein is Cell division protein FtsQ.